We begin with the raw amino-acid sequence, 691 residues long: DNA ligase (691 aa).

Residues Asp-53–Asp-57, Ser-102–Leu-103, and Glu-135 contribute to the NAD(+) site. Catalysis depends on Lys-137, which acts as the N6-AMP-lysine intermediate. 4 residues coordinate NAD(+): Arg-158, Glu-195, Lys-310, and Lys-334. Cys-428, Cys-431, Cys-446, and Cys-452 together coordinate Zn(2+). In terms of domain architecture, BRCT spans Ser-613–Glu-691.

Belongs to the NAD-dependent DNA ligase family. LigA subfamily. Mg(2+) is required as a cofactor. Mn(2+) serves as cofactor.

The catalysed reaction is NAD(+) + (deoxyribonucleotide)n-3'-hydroxyl + 5'-phospho-(deoxyribonucleotide)m = (deoxyribonucleotide)n+m + AMP + beta-nicotinamide D-nucleotide.. Functionally, DNA ligase that catalyzes the formation of phosphodiester linkages between 5'-phosphoryl and 3'-hydroxyl groups in double-stranded DNA using NAD as a coenzyme and as the energy source for the reaction. It is essential for DNA replication and repair of damaged DNA. The chain is DNA ligase from Psychrobacter cryohalolentis (strain ATCC BAA-1226 / DSM 17306 / VKM B-2378 / K5).